Here is a 124-residue protein sequence, read N- to C-terminus: Small ribosomal subunit protein uS12 (124 aa).

Positions 1-25 are disordered; it reads MATINQLVRKPRQATTYKSASPALD. Asp-89 carries the post-translational modification 3-methylthioaspartic acid.

The protein belongs to the universal ribosomal protein uS12 family. Part of the 30S ribosomal subunit. Contacts proteins S8 and S17. May interact with IF1 in the 30S initiation complex.

Functionally, with S4 and S5 plays an important role in translational accuracy. Interacts with and stabilizes bases of the 16S rRNA that are involved in tRNA selection in the A site and with the mRNA backbone. Located at the interface of the 30S and 50S subunits, it traverses the body of the 30S subunit contacting proteins on the other side and probably holding the rRNA structure together. The combined cluster of proteins S8, S12 and S17 appears to hold together the shoulder and platform of the 30S subunit. This is Small ribosomal subunit protein uS12 from Xanthomonas campestris pv. campestris (strain 8004).